Reading from the N-terminus, the 443-residue chain is Thymidine phosphorylase (443 aa).

The protein belongs to the thymidine/pyrimidine-nucleoside phosphorylase family. As to quaternary structure, homodimer.

It carries out the reaction thymidine + phosphate = 2-deoxy-alpha-D-ribose 1-phosphate + thymine. It participates in pyrimidine metabolism; dTMP biosynthesis via salvage pathway; dTMP from thymine: step 1/2. Its function is as follows. The enzymes which catalyze the reversible phosphorolysis of pyrimidine nucleosides are involved in the degradation of these compounds and in their utilization as carbon and energy sources, or in the rescue of pyrimidine bases for nucleotide synthesis. The polypeptide is Thymidine phosphorylase (Aeromonas salmonicida (strain A449)).